The sequence spans 376 residues: Chaperone protein DnaJ (376 aa).

Positions 5-70 (DYYEILGVSK…QKRAAYDQYG (66 aa)) constitute a J domain. The CR-type zinc finger occupies 131 to 209 (GVTKEIRIPT…CHGHGRVERS (79 aa)). Positions 144, 147, 161, 164, 183, 186, 197, and 200 each coordinate Zn(2+). CXXCXGXG motif repeat units lie at residues 144-151 (CDVCHGSG), 161-168 (CPTCHGSG), 183-190 (CPHCQGRG), and 197-204 (CNKCHGHG).

It belongs to the DnaJ family. Homodimer. Zn(2+) serves as cofactor.

It is found in the cytoplasm. Its function is as follows. Participates actively in the response to hyperosmotic and heat shock by preventing the aggregation of stress-denatured proteins and by disaggregating proteins, also in an autonomous, DnaK-independent fashion. Unfolded proteins bind initially to DnaJ; upon interaction with the DnaJ-bound protein, DnaK hydrolyzes its bound ATP, resulting in the formation of a stable complex. GrpE releases ADP from DnaK; ATP binding to DnaK triggers the release of the substrate protein, thus completing the reaction cycle. Several rounds of ATP-dependent interactions between DnaJ, DnaK and GrpE are required for fully efficient folding. Also involved, together with DnaK and GrpE, in the DNA replication of plasmids through activation of initiation proteins. In Shigella boydii serotype 18 (strain CDC 3083-94 / BS512), this protein is Chaperone protein DnaJ.